A 318-amino-acid chain; its full sequence is Beta-galactosidase small subunit (318 aa).

Belongs to the bacterial beta-galactosidase small subunit family. As to quaternary structure, heterodimer of a large (LacL) and a small subunit (LacM).

The catalysed reaction is Hydrolysis of terminal non-reducing beta-D-galactose residues in beta-D-galactosides.. In terms of biological role, component of a beta-galactosidase. In Lactobacillus helveticus (Lactobacillus suntoryeus), this protein is Beta-galactosidase small subunit.